A 151-amino-acid chain; its full sequence is Protein InSETG-4 (151 aa).

The protein localises to the cytoplasm. It is found in the cytosol. In Homo sapiens (Human), this protein is Protein InSETG-4 (InSet4-G).